A 190-amino-acid polypeptide reads, in one-letter code: Holliday junction branch migration complex subunit RuvA (190 aa).

The segment at 1 to 65 is domain I; it reads MIGTLSGTVE…DGVSQLYGFA (65 aa). The interval 66–137 is domain II; it reads NREEQNCMRM…LTPQVQKFEL (72 aa). The segment at 137 to 141 is flexible linker; sequence LNRFA. Residues 142–190 form a domain III region; the sequence is ATTRTDSEAVAALLSLGYERTAALGALQKVGVCDSTEDAVRRALLELSK.

This sequence belongs to the RuvA family. Homotetramer. Forms an RuvA(8)-RuvB(12)-Holliday junction (HJ) complex. HJ DNA is sandwiched between 2 RuvA tetramers; dsDNA enters through RuvA and exits via RuvB. An RuvB hexamer assembles on each DNA strand where it exits the tetramer. Each RuvB hexamer is contacted by two RuvA subunits (via domain III) on 2 adjacent RuvB subunits; this complex drives branch migration. In the full resolvosome a probable DNA-RuvA(4)-RuvB(12)-RuvC(2) complex forms which resolves the HJ.

It is found in the cytoplasm. In terms of biological role, the RuvA-RuvB-RuvC complex processes Holliday junction (HJ) DNA during genetic recombination and DNA repair, while the RuvA-RuvB complex plays an important role in the rescue of blocked DNA replication forks via replication fork reversal (RFR). RuvA specifically binds to HJ cruciform DNA, conferring on it an open structure. The RuvB hexamer acts as an ATP-dependent pump, pulling dsDNA into and through the RuvAB complex. HJ branch migration allows RuvC to scan DNA until it finds its consensus sequence, where it cleaves and resolves the cruciform DNA. The protein is Holliday junction branch migration complex subunit RuvA of Anaplasma marginale (strain Florida).